The chain runs to 513 residues: ATP synthase subunit alpha (513 aa).

169–176 (GDRQTGKT) lines the ATP pocket.

Belongs to the ATPase alpha/beta chains family. F-type ATPases have 2 components, CF(1) - the catalytic core - and CF(0) - the membrane proton channel. CF(1) has five subunits: alpha(3), beta(3), gamma(1), delta(1), epsilon(1). CF(0) has three main subunits: a(1), b(2) and c(9-12). The alpha and beta chains form an alternating ring which encloses part of the gamma chain. CF(1) is attached to CF(0) by a central stalk formed by the gamma and epsilon chains, while a peripheral stalk is formed by the delta and b chains.

It is found in the cell inner membrane. The catalysed reaction is ATP + H2O + 4 H(+)(in) = ADP + phosphate + 5 H(+)(out). Functionally, produces ATP from ADP in the presence of a proton gradient across the membrane. The alpha chain is a regulatory subunit. This is ATP synthase subunit alpha from Tolumonas auensis (strain DSM 9187 / NBRC 110442 / TA 4).